We begin with the raw amino-acid sequence, 474 residues long: Glycogen synthase (474 aa).

K15 serves as a coordination point for ADP-alpha-D-glucose.

It belongs to the glycosyltransferase 1 family. Bacterial/plant glycogen synthase subfamily.

The enzyme catalyses [(1-&gt;4)-alpha-D-glucosyl](n) + ADP-alpha-D-glucose = [(1-&gt;4)-alpha-D-glucosyl](n+1) + ADP + H(+). Its pathway is glycan biosynthesis; glycogen biosynthesis. In terms of biological role, synthesizes alpha-1,4-glucan chains using ADP-glucose. The chain is Glycogen synthase from Chlamydia trachomatis serovar A (strain ATCC VR-571B / DSM 19440 / HAR-13).